A 226-amino-acid polypeptide reads, in one-letter code: Transmembrane gamma-carboxyglutamic acid protein 4 (226 aa).

Residues 1-17 (MFPLLIVLSQLPRLTLA) form the signal peptide. A propeptide spanning residues 18–49 (VPHCIRSLKDSEHAPEEVFASKEAANIFMHRR) is cleaved from the precursor. At 50–113 (LLNNRFDLEL…GSDVNKEKID (64 aa)) the chain is on the extracellular side. Residues 52-98 (NNRFDLELFTPGDLERECYEEFCSYEEAREILGDDENTIKFWQTYSI) form the Gla domain. A disulfide bond links Cys69 and Cys74. Glu72 is subject to 4-carboxyglutamate. Residues 114-134 (VMSLLTGLIVAGVFLVIFGLV) form a helical membrane-spanning segment. At 135–226 (GYYVCLTKCK…FKKSMSLPSH (92 aa)) the chain is on the cytoplasmic side. Position 164 is a phosphoserine (Ser164). The LPXY motif; mediates binding to WW domain-containing proteins signature appears at 186 to 189 (LPSY). Positions 204–207 (PPPY) match the PPXY motif; mediates binding to WW domain-containing proteins motif.

It belongs to the commissureless family. As to quaternary structure, interacts (via cytoplasmic domain) with WW domain-containing proteins MAGI1, MAGI3, NEDD4, NEDD4L, WWTR1/TAZ and YAP1. In terms of processing, gamma-carboxyglutamate residues are formed by vitamin K dependent carboxylation. These residues are essential for the binding of calcium.

Its subcellular location is the endoplasmic reticulum-Golgi intermediate compartment membrane. The protein localises to the cell membrane. Functionally, may control axon guidance across the CNS. Prevents the delivery of ROBO1 at the cell surface and down-regulates its expression. The chain is Transmembrane gamma-carboxyglutamic acid protein 4 (Prrg4) from Mus musculus (Mouse).